A 260-amino-acid polypeptide reads, in one-letter code: Potassium inward rectifier (Kir)-like channel 3 (260 aa).

The segment at 1–34 is disordered; the sequence is MPMTPSEFKNRLLFGSLPRSSSDPTDLQFTEPNV. Residues 1–68 are Cytoplasmic-facing; that stretch reads MPMTPSEFKN…EQSVSKSIAR (68 aa). Over residues 18–31 the composition is skewed to polar residues; the sequence is PRSSSDPTDLQFTE. Residues 69-89 form a helical membrane-spanning segment; that stretch reads QALALLVVYLSLGVLIYWLTL. Residues 127 to 146 constitute an intramembrane region (pore-forming); the sequence is DSFCFSVMMVTTVGFGDRAF. Residues 153–173 traverse the membrane as a helical segment; the sequence is FLAAVWLLVSTLAVARAFLFL. Residues 174-260 lie on the Cytoplasmic side of the membrane; the sequence is ADARADKRNR…LVDLTTATSV (87 aa). EF-hand domains lie at 190–225 and 229–256; these read LGESISISQFFAADIDNDGRLSLAEFAIYKLKQMEK and EDFIQICNQFDKLDRTQSGRITLVDLTT. Positions 203, 205, 207, 209, 214, 242, 246, 248, and 253 each coordinate Ca(2+).

Belongs to the two pore domain potassium channel (TC 1.A.1.7) family. Homotetramer. As to expression, expressed in hydathodes and the vascular tissues of roots, stems, leaves and flowers.

Its subcellular location is the vacuole membrane. Functionally, probable calcium-activated potassium channel. The sequence is that of Potassium inward rectifier (Kir)-like channel 3 (KCO3) from Arabidopsis thaliana (Mouse-ear cress).